A 449-amino-acid chain; its full sequence is MFLLKSIPQVDKFIKNEKFASLPLTLLVQITAEVLQDLRERILKNEIESFSEDELVKKVLQKYKDITKPSLQKIINATGVIVHTNLGRSLIDANAFERVKGIVTSYNNLEYDLEKGKRGERYSHISDAICRLLGCEDVLIVNNNASAVFLILNTFAKQKEVVVSRGELVEIGGSFRVPDVMKQSGAKLVEVGATNKTHLYDYENAISKKTSMLMKVHKSNYSIEGFSSEVEFKELVKLAREKNLIDYYDMGSGHLVNLPYGLDQHEPSVLKYMQENPSLLSFSGDKLLGSVQAGIIVGKKEYIAKLKKNQLLRMLRVDKLTLALLEDSVISVLLNKLDEIPTLKMLFASTCELKENALVLQDAIKDICDCEVLETKTVIGGGTTPNKMIPSIALAIKIDNYKQNKMEKLFRAKNIIGRIENDRFLLDFRTIRKSEIQEIAHVVKEIANV.

Residue lysine 286 is modified to N6-(pyridoxal phosphate)lysine.

Belongs to the SelA family. Requires pyridoxal 5'-phosphate as cofactor.

The protein resides in the cytoplasm. The catalysed reaction is L-seryl-tRNA(Sec) + selenophosphate + H(+) = L-selenocysteinyl-tRNA(Sec) + phosphate. Its pathway is aminoacyl-tRNA biosynthesis; selenocysteinyl-tRNA(Sec) biosynthesis; selenocysteinyl-tRNA(Sec) from L-seryl-tRNA(Sec) (bacterial route): step 1/1. In terms of biological role, converts seryl-tRNA(Sec) to selenocysteinyl-tRNA(Sec) required for selenoprotein biosynthesis. In Sulfurimonas denitrificans (strain ATCC 33889 / DSM 1251) (Thiomicrospira denitrificans (strain ATCC 33889 / DSM 1251)), this protein is L-seryl-tRNA(Sec) selenium transferase.